The primary structure comprises 289 residues: Delta-sarcoglycan (289 aa).

Residues 1 to 37 (MPQEQYSHHRSTMPSSEGPHIYKVGIYGWRKRCLYFF) lie on the Cytoplasmic side of the membrane. The chain crosses the membrane as a helical; Signal-anchor for type II membrane protein span at residues 38 to 56 (VLLLMILILVNLAMTIWIL). The Extracellular portion of the chain corresponds to 57 to 289 (KVMNFTIDGM…TCQINTSVCL (233 aa)). Residues asparagine 60 and asparagine 108 are each glycosylated (N-linked (GlcNAc...) asparagine). Cystine bridges form between cysteine 263–cysteine 288 and cysteine 265–cysteine 281. N-linked (GlcNAc...) asparagine glycosylation occurs at asparagine 284.

Belongs to the sarcoglycan beta/delta/gamma/zeta family. Interacts with FLNC. Cross-link to form 2 major subcomplexes: one consisting of SGCB, SGCD and SGCG and the other consisting of SGCB and SGCD. The association between SGCB and SGCG is particularly strong while SGCA is loosely associated with the other sarcoglycans. Interacts with DAG1. Disulfide bonds are present. Most strongly expressed in skeletal and heart muscle. Also detected in proliferating myoblasts.

The protein localises to the cell membrane. It is found in the sarcolemma. The protein resides in the cytoplasm. Its subcellular location is the cytoskeleton. Functionally, component of the sarcoglycan complex, a subcomplex of the dystrophin-glycoprotein complex which forms a link between the F-actin cytoskeleton and the extracellular matrix. The sequence is that of Delta-sarcoglycan (Sgcd) from Mus musculus (Mouse).